We begin with the raw amino-acid sequence, 129 residues long: Glycine cleavage system H protein (129 aa).

The 83-residue stretch at Leu24–Arg106 folds into the Lipoyl-binding domain. Residue Lys65 is modified to N6-lipoyllysine.

It belongs to the GcvH family. The glycine cleavage system is composed of four proteins: P, T, L and H. (R)-lipoate is required as a cofactor.

In terms of biological role, the glycine cleavage system catalyzes the degradation of glycine. The H protein shuttles the methylamine group of glycine from the P protein to the T protein. The protein is Glycine cleavage system H protein of Synechococcus sp. (strain CC9902).